The following is a 495-amino-acid chain: MKYSAKNTALSQIDSNIILAVFEDGELSPTAMQFDQLSQGYLTRLIQVGEVSGKQGQVLILRDIPNCQAQRIFIVGCGKKDKITERQYKQIIQKTIQTILETQASEVVSFLNEIELKNRDIHWNIRFAIETIEASHYQFDTFKSKKTDASLVLDRFIFNVPTELQQNALQAISYAQAIALGVKYAKDIANCPPNVCNPTYLAEQAQSLAKHSNLINVQVLGEKEMAELNMFSYLAVSQGSANEAKMSVIEYRNHPDKNAKPIVLVGKGLTFDAGGISLKPADSMDEMKYDMCGAASVFGVMYALATLQLPLNVIGVLAGCENLPDGNSYRPGDILTTMSGLTVEVLNTDAEGRLVLCDALTYVERFNPELVIDVATLTGACVVALGQHNSGLIATDGKLAEKLLNAAEETTDKAWRLPLSEEYQEQLKSNFADLANIGGRWGGAITAGAFLANFTKNYPWAHLDIAGTAWLQGTNKGATGRPVSLLTQFLINQSK.

Residues K267 and D272 each coordinate Mn(2+). K279 is an active-site residue. Mn(2+) contacts are provided by D290, D349, and E351. Residue R353 is part of the active site.

The protein belongs to the peptidase M17 family. It depends on Mn(2+) as a cofactor.

It is found in the cytoplasm. The enzyme catalyses Release of an N-terminal amino acid, Xaa-|-Yaa-, in which Xaa is preferably Leu, but may be other amino acids including Pro although not Arg or Lys, and Yaa may be Pro. Amino acid amides and methyl esters are also readily hydrolyzed, but rates on arylamides are exceedingly low.. The catalysed reaction is Release of an N-terminal amino acid, preferentially leucine, but not glutamic or aspartic acids.. In terms of biological role, presumably involved in the processing and regular turnover of intracellular proteins. Catalyzes the removal of unsubstituted N-terminal amino acids from various peptides. This Histophilus somni (strain 2336) (Haemophilus somnus) protein is Probable cytosol aminopeptidase.